Here is a 509-residue protein sequence, read N- to C-terminus: ATP synthase subunit alpha (509 aa).

Gly-169 to Thr-176 is a binding site for ATP.

The protein belongs to the ATPase alpha/beta chains family. In terms of assembly, F-type ATPases have 2 components, CF(1) - the catalytic core - and CF(0) - the membrane proton channel. CF(1) has five subunits: alpha(3), beta(3), gamma(1), delta(1), epsilon(1). CF(0) has four main subunits: a(1), b(1), b'(1) and c(9-12).

The protein localises to the cell inner membrane. It carries out the reaction ATP + H2O + 4 H(+)(in) = ADP + phosphate + 5 H(+)(out). Its function is as follows. Produces ATP from ADP in the presence of a proton gradient across the membrane. The alpha chain is a regulatory subunit. The protein is ATP synthase subunit alpha of Erythrobacter litoralis (strain HTCC2594).